The chain runs to 291 residues: tRNA U34 carboxymethyltransferase (291 aa).

Carboxy-S-adenosyl-L-methionine-binding positions include lysine 61, tryptophan 75, lysine 80, glycine 100, 122 to 124, 149 to 150, tyrosine 169, and arginine 284; these read DPS and VE.

This sequence belongs to the class I-like SAM-binding methyltransferase superfamily. CmoB family. In terms of assembly, homotetramer.

The catalysed reaction is carboxy-S-adenosyl-L-methionine + 5-hydroxyuridine(34) in tRNA = 5-carboxymethoxyuridine(34) in tRNA + S-adenosyl-L-homocysteine + H(+). In terms of biological role, catalyzes carboxymethyl transfer from carboxy-S-adenosyl-L-methionine (Cx-SAM) to 5-hydroxyuridine (ho5U) to form 5-carboxymethoxyuridine (cmo5U) at position 34 in tRNAs. This is tRNA U34 carboxymethyltransferase from Campylobacter jejuni subsp. doylei (strain ATCC BAA-1458 / RM4099 / 269.97).